Reading from the N-terminus, the 107-residue chain is Quaternary ammonium compound-resistance protein QacC (107 aa).

Topologically, residues 1–2 are cytoplasmic; sequence MP. A helical membrane pass occupies residues 3–20; the sequence is YIYLIIAISTEVIGSAFL. Topologically, residues 21 to 29 are extracellular; it reads KSSEGFSKF. The chain crosses the membrane as a helical span at residues 30–47; the sequence is IPSLGTIISFGICFYFLS. Over 48-56 the chain is Cytoplasmic; it reads KTMQHLPLN. A helical membrane pass occupies residues 57 to 75; that stretch reads ITYATWAGLGLVLTTVVSI. At 76–85 the chain is on the extracellular side; it reads IIFKEQINLI. Residues 86-103 traverse the membrane as a helical segment; sequence TIVSIVLIIVGVVSLNIF. Residues 104–107 lie on the Cytoplasmic side of the membrane; it reads GTSH.

This sequence belongs to the drug/metabolite transporter (DMT) superfamily. Small multidrug resistance (SMR) (TC 2.A.7.1) family.

The protein localises to the cell membrane. Its activity is regulated as follows. Ethidium export is inhibited by N-ethylmaleimide (NEM). In terms of biological role, multidrug exporter. Is implicated for the resistance to bacteriocidal quaternary ammonium compounds and ethidium bromide. The polypeptide is Quaternary ammonium compound-resistance protein QacC (Staphylococcus aureus).